A 138-amino-acid chain; its full sequence is Putative transcriptional regulatory protein NedR (138 aa).

The tract at residues 1-25 (MCWGRSWTFGRSSSKGWRPTSSASS) is disordered. Residues 9–25 (FGRSSSKGWRPTSSASS) are compositionally biased toward polar residues.

In terms of biological role, may serve as a transcriptional regulator. This chain is Putative transcriptional regulatory protein NedR (nedR), found in Micromonospora viridifaciens.